Consider the following 146-residue polypeptide: Microsomal glutathione S-transferase 2 (146 aa).

Helical transmembrane passes span 6–26 (ILLAALSVLSACQQSYFAMQV), 59–79 (FYPIFIITLWMAGWYFNQVFA), and 111–131 (SLGVLALLTVLGAVGILNSFL).

This sequence belongs to the MAPEG family. As to quaternary structure, homotrimer.

Its subcellular location is the endoplasmic reticulum membrane. It localises to the microsome membrane. It catalyses the reaction RX + glutathione = an S-substituted glutathione + a halide anion + H(+). It carries out the reaction 1-chloro-2,4-dinitrobenzene + glutathione = 2,4-dinitrophenyl-S-glutathione + chloride + H(+). The catalysed reaction is leukotriene C4 = leukotriene A4 + glutathione. The enzyme catalyses (5S)-hydroperoxy-(6E,8Z,11Z,14Z)-eicosatetraenoate + 2 glutathione = (5S)-hydroxy-(6E,8Z,11Z,14Z)-eicosatetraenoate + glutathione disulfide + H2O. With respect to regulation, each monomer binds on GSH molecule but only one subunit is catalytically active. In terms of biological role, catalyzes several different glutathione-dependent reactions. Catalyzes the glutathione-dependent reduction of lipid hydroperoxides, such as 5-HPETE. Has glutathione transferase activity, toward xenobiotic electrophiles, such as 1-chloro-2, 4-dinitrobenzene (CDNB). Also catalyzes the conjugation of leukotriene A4 with reduced glutathione to form leukotriene C4 (LTC4). Involved in oxidative DNA damage induced by ER stress and anticancer agents by activating LTC4 biosynthetic machinery in nonimmune cells. The sequence is that of Microsomal glutathione S-transferase 2 (MGST2) from Bos taurus (Bovine).